The sequence spans 229 residues: uncharacterized protein (229 aa).

The next 7 membrane-spanning stretches (helical) occupy residues 21–41 (IYSL…LMLY), 56–76 (MIYY…SGAA), 83–103 (ALPI…FIIV), 109–129 (TVFQ…IIGV), 141–161 (AMFA…FIGS), 162–182 (GMMS…LIAS), and 202–222 (WAVA…ISLL).

The protein belongs to the BI1 family.

Its subcellular location is the cell membrane. This is an uncharacterized protein from Streptococcus pyogenes serotype M3 (strain ATCC BAA-595 / MGAS315).